Consider the following 538-residue polypeptide: Putative amidase kk1C (538 aa).

A disordered region spans residues 1–32 (MTEPTWKTVASEKQQQRESKIPSEWQIPKSSH). Catalysis depends on charge relay system residues Lys-134 and Ser-209. The active-site Acyl-ester intermediate is Ser-233.

The protein belongs to the amidase family.

It catalyses the reaction a monocarboxylic acid amide + H2O = a monocarboxylate + NH4(+). It functions in the pathway secondary metabolite biosynthesis. Putative amidase; part of the gene cluster that mediates the biosynthesis of KK-1, a novel cyclic depsipeptide with 10 residues which is a promising active compound with high activity against many plant pathogens, especially Botrytis cinerea. The role of kk1C in KK-1 biosynthesis has still to be determined. The nonribosomal peptide synthetase (NRPS) kk1B catalyzes the elongation and cyclization of the decapeptide chain composed of 1 D-lactic acid residue (D-Lac), 1 pipecolic acid residue (Pip), 1 aspartic acid residue (Asp), 1 isoleucine residue (Ile), 1 glycine residue (Gly), 1 tyrosine residue (Tyr) and 4 valine residues (Val). The Asp, Ile and 3 Val residues are N-methylated by the 5 methyltransferase domains from the NRPS (found in modules 3, 5, 6, 7 and 9), whereas the Tyr residue is O-methylated by the cluster encoded O-methyltransferase kk1A. The thioesterase kk1J is likely to be involved in the corrective mechanism of peptide chain synthesis. The D-lactate dehydrogenase kk1H is involved in the synthesis of D-lactic acid from pyruvic acid, which is recognized by the A domain of the first kk1B module. The pyrroline-5-carboxylate reductase kk1I is involved in the synthesis of the L-pipecolic acid residue of KK-1 from delta-1-pyrroline-5-carboxylate (P5C), a metabolic intermediate of lysine. It is still unclear how kk1C and kk1D are involved in the production of KK-1. In Curvularia clavata, this protein is Putative amidase kk1C.